The primary structure comprises 366 residues: Protein-glutamate methylesterase/protein-glutamine glutaminase (366 aa).

A Response regulatory domain is found at 5-123 (RVLVVDDSVV…SVGRSMEQVR (119 aa)). The residue at position 56 (Asp-56) is a 4-aspartylphosphate. The CheB-type methylesterase domain maps to 163–355 (PLGGHRLLVI…PEILRRLARQ (193 aa)). Residues Ser-175, His-201, and Asp-297 contribute to the active site.

This sequence belongs to the CheB family. Post-translationally, phosphorylated by CheA. Phosphorylation of the N-terminal regulatory domain activates the methylesterase activity.

Its subcellular location is the cytoplasm. It carries out the reaction [protein]-L-glutamate 5-O-methyl ester + H2O = L-glutamyl-[protein] + methanol + H(+). The catalysed reaction is L-glutaminyl-[protein] + H2O = L-glutamyl-[protein] + NH4(+). Its function is as follows. Involved in chemotaxis. Part of a chemotaxis signal transduction system that modulates chemotaxis in response to various stimuli. Catalyzes the demethylation of specific methylglutamate residues introduced into the chemoreceptors (methyl-accepting chemotaxis proteins or MCP) by CheR. Also mediates the irreversible deamidation of specific glutamine residues to glutamic acid. The chain is Protein-glutamate methylesterase/protein-glutamine glutaminase from Nocardioides sp. (strain ATCC BAA-499 / JS614).